Here is a 178-residue protein sequence, read N- to C-terminus: ATP synthase subunit delta (178 aa).

It belongs to the ATPase delta chain family. As to quaternary structure, F-type ATPases have 2 components, F(1) - the catalytic core - and F(0) - the membrane proton channel. F(1) has five subunits: alpha(3), beta(3), gamma(1), delta(1), epsilon(1). F(0) has three main subunits: a(1), b(2) and c(10-14). The alpha and beta chains form an alternating ring which encloses part of the gamma chain. F(1) is attached to F(0) by a central stalk formed by the gamma and epsilon chains, while a peripheral stalk is formed by the delta and b chains.

Its subcellular location is the cell inner membrane. Functionally, f(1)F(0) ATP synthase produces ATP from ADP in the presence of a proton or sodium gradient. F-type ATPases consist of two structural domains, F(1) containing the extramembraneous catalytic core and F(0) containing the membrane proton channel, linked together by a central stalk and a peripheral stalk. During catalysis, ATP synthesis in the catalytic domain of F(1) is coupled via a rotary mechanism of the central stalk subunits to proton translocation. Its function is as follows. This protein is part of the stalk that links CF(0) to CF(1). It either transmits conformational changes from CF(0) to CF(1) or is implicated in proton conduction. This Ectopseudomonas mendocina (strain ymp) (Pseudomonas mendocina) protein is ATP synthase subunit delta.